Here is a 122-residue protein sequence, read N- to C-terminus: Large ribosomal subunit protein uL18 (122 aa).

Belongs to the universal ribosomal protein uL18 family. Part of the 50S ribosomal subunit; part of the 5S rRNA/L5/L18/L25 subcomplex. Contacts the 5S and 23S rRNAs.

Functionally, this is one of the proteins that bind and probably mediate the attachment of the 5S RNA into the large ribosomal subunit, where it forms part of the central protuberance. This chain is Large ribosomal subunit protein uL18, found in Ruminiclostridium cellulolyticum (strain ATCC 35319 / DSM 5812 / JCM 6584 / H10) (Clostridium cellulolyticum).